A 647-amino-acid chain; its full sequence is DNA mismatch repair protein MutL (647 aa).

Residues 387-400 are compositionally biased toward basic and acidic residues; sequence SAKPVHEATDEKAE. The disordered stretch occupies residues 387–412; the sequence is SAKPVHEATDEKAEPQSTSVKFAERK.

The protein belongs to the DNA mismatch repair MutL/HexB family.

Functionally, this protein is involved in the repair of mismatches in DNA. It is required for dam-dependent methyl-directed DNA mismatch repair. May act as a 'molecular matchmaker', a protein that promotes the formation of a stable complex between two or more DNA-binding proteins in an ATP-dependent manner without itself being part of a final effector complex. This is DNA mismatch repair protein MutL from Streptococcus sanguinis (strain SK36).